A 499-amino-acid polypeptide reads, in one-letter code: Lysine--tRNA ligase (499 aa).

Mg(2+)-binding residues include glutamate 408 and glutamate 415.

The protein belongs to the class-II aminoacyl-tRNA synthetase family. Homodimer. It depends on Mg(2+) as a cofactor.

It is found in the cytoplasm. The enzyme catalyses tRNA(Lys) + L-lysine + ATP = L-lysyl-tRNA(Lys) + AMP + diphosphate. The chain is Lysine--tRNA ligase from Thermoanaerobacter sp. (strain X514).